The following is a 604-amino-acid chain: Aspartate--tRNA(Asp/Asn) ligase (604 aa).

Residue glutamate 175 participates in L-aspartate binding. The tract at residues 199 to 202 (QQFK) is aspartate. 2 residues coordinate L-aspartate: arginine 221 and histidine 456. 221-223 (RDE) serves as a coordination point for ATP. Glutamate 496 is an ATP binding site. An L-aspartate-binding site is contributed by arginine 503. 548 to 551 (GVDR) lines the ATP pocket.

Belongs to the class-II aminoacyl-tRNA synthetase family. Type 1 subfamily. Homodimer.

It localises to the cytoplasm. The enzyme catalyses tRNA(Asx) + L-aspartate + ATP = L-aspartyl-tRNA(Asx) + AMP + diphosphate. In terms of biological role, aspartyl-tRNA synthetase with relaxed tRNA specificity since it is able to aspartylate not only its cognate tRNA(Asp) but also tRNA(Asn). Reaction proceeds in two steps: L-aspartate is first activated by ATP to form Asp-AMP and then transferred to the acceptor end of tRNA(Asp/Asn). In Methylobacterium sp. (strain 4-46), this protein is Aspartate--tRNA(Asp/Asn) ligase.